The following is a 143-amino-acid chain: 3-hydroxyacyl-[acyl-carrier-protein] dehydratase FabZ (143 aa).

The active site involves His49.

This sequence belongs to the thioester dehydratase family. FabZ subfamily.

It is found in the cytoplasm. The enzyme catalyses a (3R)-hydroxyacyl-[ACP] = a (2E)-enoyl-[ACP] + H2O. Functionally, involved in unsaturated fatty acids biosynthesis. Catalyzes the dehydration of short chain beta-hydroxyacyl-ACPs and long chain saturated and unsaturated beta-hydroxyacyl-ACPs. This chain is 3-hydroxyacyl-[acyl-carrier-protein] dehydratase FabZ, found in Wolbachia sp. subsp. Drosophila simulans (strain wRi).